The primary structure comprises 313 residues: MLNREPLTKEEALTIFESSELDTFDLLNEAYTVRKHYYGKKVKLNMILNAKSGICAEDCGYCGQSVKMKEKQRYALVEQDQIKEGAQVATENQIGTYCIVMSGRGPSNREVDHICETVEDIKKIHPQLKICACLGLTKEEQAKKLKAAGVDRYNHNLNTSERYHDEVVTTHTYEDRVNTVEMMKDNNISPCSGVICGMGESNEDIIDMAFALRAIDADSIPINFLHPIKGTKFGGLDLLSPMKCLRIIAMFRLINPTKEIRIAGGREVNLRSLQPLALKAANSIFVGDYLITGGQPNEEDYRMIEDLGFEIDS.

A Radical SAM core domain is found at 37-263 (YYGKKVKLNM…INPTKEIRIA (227 aa)). Positions 55, 59, and 62 each coordinate [4Fe-4S] cluster. Positions 98, 131, 191, and 261 each coordinate [2Fe-2S] cluster.

Belongs to the radical SAM superfamily. Biotin synthase family. Homodimer. It depends on [4Fe-4S] cluster as a cofactor. Requires [2Fe-2S] cluster as cofactor.

It catalyses the reaction (4R,5S)-dethiobiotin + (sulfur carrier)-SH + 2 reduced [2Fe-2S]-[ferredoxin] + 2 S-adenosyl-L-methionine = (sulfur carrier)-H + biotin + 2 5'-deoxyadenosine + 2 L-methionine + 2 oxidized [2Fe-2S]-[ferredoxin]. It participates in cofactor biosynthesis; biotin biosynthesis; biotin from 7,8-diaminononanoate: step 2/2. In terms of biological role, catalyzes the conversion of dethiobiotin (DTB) to biotin by the insertion of a sulfur atom into dethiobiotin via a radical-based mechanism. This is Biotin synthase from Staphylococcus epidermidis (strain ATCC 12228 / FDA PCI 1200).